A 98-amino-acid chain; its full sequence is NADH-ubiquinone oxidoreductase chain 4L (98 aa).

3 consecutive transmembrane segments (helical) span residues P2–F22, S28–I48, and I61–V81.

This sequence belongs to the complex I subunit 4L family. As to quaternary structure, core subunit of respiratory chain NADH dehydrogenase (Complex I) which is composed of 45 different subunits.

The protein localises to the mitochondrion inner membrane. It carries out the reaction a ubiquinone + NADH + 5 H(+)(in) = a ubiquinol + NAD(+) + 4 H(+)(out). In terms of biological role, core subunit of the mitochondrial membrane respiratory chain NADH dehydrogenase (Complex I) which catalyzes electron transfer from NADH through the respiratory chain, using ubiquinone as an electron acceptor. Part of the enzyme membrane arm which is embedded in the lipid bilayer and involved in proton translocation. The protein is NADH-ubiquinone oxidoreductase chain 4L (MT-ND4L) of Allocebus trichotis (Hairy-eared dwarf lemur).